We begin with the raw amino-acid sequence, 164 residues long: uncharacterized protein (164 aa).

The next 4 helical transmembrane spans lie at 25–45, 63–83, 120–140, and 141–161; these read QFGFSYGLFGLSGALIYPLLG, GMAVLLLYVPHIGSVVQVYIV, FWTAVFSAAAIMLGGFLADFF, and TVQMIFYASSILYFLSGLMMM.

The protein belongs to the major facilitator superfamily.

The protein localises to the cell membrane. This is an uncharacterized protein from Bacillus subtilis (strain 168).